A 121-amino-acid polypeptide reads, in one-letter code: uncharacterized protein (121 aa).

A coiled-coil region spans residues 8 to 37 (KQLMVCRDEIKKLKLKEKEAKNRILTYLKN).

This is an uncharacterized protein from Aedes vexans (Inland floodwater mosquito).